Here is a 363-residue protein sequence, read N- to C-terminus: Fructose-bisphosphate aldolase C (363 aa).

The substrate site is built by Arg56 and Lys147. The Schiff-base intermediate with dihydroxyacetone-P role is filled by Lys230.

This sequence belongs to the class I fructose-bisphosphate aldolase family. Homotetramer. As to expression, expressed in brain but not in liver or muscle.

The catalysed reaction is beta-D-fructose 1,6-bisphosphate = D-glyceraldehyde 3-phosphate + dihydroxyacetone phosphate. Its pathway is carbohydrate degradation; glycolysis; D-glyceraldehyde 3-phosphate and glycerone phosphate from D-glucose: step 4/4. This chain is Fructose-bisphosphate aldolase C (aldoc), found in Carassius auratus (Goldfish).